The sequence spans 793 residues: Probable phosphoketolase (793 aa).

This sequence belongs to the XFP family. Requires thiamine diphosphate as cofactor.

The protein is Probable phosphoketolase of Streptomyces avermitilis (strain ATCC 31267 / DSM 46492 / JCM 5070 / NBRC 14893 / NCIMB 12804 / NRRL 8165 / MA-4680).